A 320-amino-acid polypeptide reads, in one-letter code: MADNEFDIDAFFSTEKKSTSSENQHCGFIAIVGRPNVGKSTLLNKILGQKISITSRKPQTTRHRIMGVDTDGDYQAIYVDTPGLHIEEKRAINRLMNRAANSSLSDVNLVFFLVDGTHWTNDDEMVLNKLQKANFPVVLCVNKVDNVQDRNEVMQHMMEMSKKMNFVDVVPISAKQGKNIDVLRKHVRDHLPKAVHHFPEEYVTDRSQRFMASEIVREKLMRFTGDELPYSVTVEIERFDYNPETDGFHINALILVERSGQKKMVIGKGGEKIKTIGREARLDMEELFGRKVYLETWVKVKSGWADDERALRSLGYIDDL.

The 169-residue stretch at 25–193 (HCGFIAIVGR…RKHVRDHLPK (169 aa)) folds into the Era-type G domain. A G1 region spans residues 33–40 (GRPNVGKS). 33 to 40 (GRPNVGKS) contacts GTP. The segment at 59–63 (QTTRH) is G2. The G3 stretch occupies residues 80 to 83 (DTPG). Residues 80 to 84 (DTPGL) and 142 to 145 (NKVD) each bind GTP. Residues 142 to 145 (NKVD) are G4. The tract at residues 172–174 (ISA) is G5. The KH type-2 domain occupies 216 to 302 (VREKLMRFTG…YLETWVKVKS (87 aa)).

The protein belongs to the TRAFAC class TrmE-Era-EngA-EngB-Septin-like GTPase superfamily. Era GTPase family. Monomer.

The protein resides in the cytoplasm. The protein localises to the cell inner membrane. In terms of biological role, an essential GTPase that binds both GDP and GTP, with rapid nucleotide exchange. Plays a role in 16S rRNA processing and 30S ribosomal subunit biogenesis and possibly also in cell cycle regulation and energy metabolism. The chain is GTPase Era from Vibrio vulnificus (strain CMCP6).